The primary structure comprises 232 residues: 5'-methylthioadenosine/S-adenosylhomocysteine nucleosidase (232 aa).

Glu12 (proton acceptor) is an active-site residue. Substrate is bound by residues Gly78, Val152, and 173 to 174; that span reads ME. Asp197 acts as the Proton donor in catalysis.

It belongs to the PNP/UDP phosphorylase family. MtnN subfamily. As to quaternary structure, homodimer.

It catalyses the reaction S-adenosyl-L-homocysteine + H2O = S-(5-deoxy-D-ribos-5-yl)-L-homocysteine + adenine. The enzyme catalyses S-methyl-5'-thioadenosine + H2O = 5-(methylsulfanyl)-D-ribose + adenine. It carries out the reaction 5'-deoxyadenosine + H2O = 5-deoxy-D-ribose + adenine. It participates in amino-acid biosynthesis; L-methionine biosynthesis via salvage pathway; S-methyl-5-thio-alpha-D-ribose 1-phosphate from S-methyl-5'-thioadenosine (hydrolase route): step 1/2. Catalyzes the irreversible cleavage of the glycosidic bond in both 5'-methylthioadenosine (MTA) and S-adenosylhomocysteine (SAH/AdoHcy) to adenine and the corresponding thioribose, 5'-methylthioribose and S-ribosylhomocysteine, respectively. Also cleaves 5'-deoxyadenosine, a toxic by-product of radical S-adenosylmethionine (SAM) enzymes, into 5-deoxyribose and adenine. Thus, is required for in vivo function of the radical SAM enzymes biotin synthase and lipoic acid synthase, that are inhibited by 5'-deoxyadenosine accumulation. The chain is 5'-methylthioadenosine/S-adenosylhomocysteine nucleosidase from Buchnera aphidicola subsp. Acyrthosiphon pisum (strain 5A).